Here is a 137-residue protein sequence, read N- to C-terminus: Methylmalonyl-CoA decarboxylase subunit delta (137 aa).

A helical transmembrane segment spans residues 30 to 50 (VTVVLGMGITVVALIFLMYII).

It belongs to the OadG family. As to quaternary structure, the methylmalonyl-CoA decarboxylase is composed of four subunits: the carboxyltransferase alpha subunit (MmdA), the tunnel beta subunit (MmdB), the biotin-containing gamma subunit (MmdC) and the delta subunit (MmdD).

The protein localises to the cell membrane. The enzyme catalyses (S)-methylmalonyl-CoA + Na(+)(in) + H(+)(out) = propanoyl-CoA + Na(+)(out) + CO2. Functionally, subunit of the sodium ion pump methylmalonyl-CoA decarboxylase, which converts the chemical energy of a decarboxylation reaction into an electrochemical gradient of Na(+) ions across the cytoplasmic membrane, thereby creating a sodium ion motive force that is used for ATP synthesis. The delta subunit is required for catalytic activity as well as for the proper assembly of the individual subunits to an enzyme complex. The polypeptide is Methylmalonyl-CoA decarboxylase subunit delta (Propionigenium modestum).